Here is a 303-residue protein sequence, read N- to C-terminus: Coenzyme PQQ synthesis protein B (303 aa).

The protein belongs to the PqqB family.

Its pathway is cofactor biosynthesis; pyrroloquinoline quinone biosynthesis. Its function is as follows. May be involved in the transport of PQQ or its precursor to the periplasm. This chain is Coenzyme PQQ synthesis protein B, found in Pseudomonas putida (strain ATCC 47054 / DSM 6125 / CFBP 8728 / NCIMB 11950 / KT2440).